The sequence spans 485 residues: Probable carboxypeptidase S-like 1 (485 aa).

Residues 1–21 (MIFKFFFIFFLIILVIKISES) form the signal peptide. Position 111 (His-111) interacts with Zn(2+). Residue Asp-113 is part of the active site. Asp-142 contacts Zn(2+). Glu-177 serves as the catalytic Proton acceptor. The Zn(2+) site is built by Glu-178, Asp-204, and His-431.

It belongs to the peptidase M20A family. It depends on Zn(2+) as a cofactor.

The protein localises to the secreted. The protein is Probable carboxypeptidase S-like 1 of Dictyostelium discoideum (Social amoeba).